Reading from the N-terminus, the 265-residue chain is GTP cyclohydrolase 1 type 2 homolog (265 aa).

H65, D103, H225, and E228 together coordinate a divalent metal cation.

This sequence belongs to the GTP cyclohydrolase I type 2/NIF3 family. Homohexamer.

The chain is GTP cyclohydrolase 1 type 2 homolog from Streptococcus pneumoniae serotype 4 (strain ATCC BAA-334 / TIGR4).